Reading from the N-terminus, the 308-residue chain is MQIYPLRLLPNKIDFDFMNFKAVSYSFSIILSLISFIWIGIYKFNFGIDFAGGIVIEVRLDQAPDLPKMRGVLGELGIGEVVLQNFGSERDLSIRFGISSEENLMKNIELIKASLQSSFPYKFEYRKVDFVGPQVGRQLIEAGAMAMLSSFLAIMVYIWVRFEWYFGLGILIALVHDVILALGFMSITKLDFNLSTIAAVLTIIGYSVNDSVVIYDRIRENLRKYHKKNITEIINLSINETLSRTILTVITTLLANLALMLFGGEAIRSFSVLVFFGIIAGTYSSIFISAPILTMFANRKFNNKVIER.

6 helical membrane passes run 22–42, 140–160, 164–184, 194–214, 246–266, and 272–292; these read AVSYSFSIILSLISFIWIGIY, IEAGAMAMLSSFLAIMVYIWV, WYFGLGILIALVHDVILALGF, LSTIAAVLTIIGYSVNDSVVI, ILTVITTLLANLALMLFGGEA, and VLVFFGIIAGTYSSIFISAPI.

Belongs to the SecD/SecF family. SecF subfamily. As to quaternary structure, forms a complex with SecD. Part of the essential Sec protein translocation apparatus which comprises SecA, SecYEG and auxiliary proteins SecDF-YajC and YidC.

It localises to the cell inner membrane. Part of the Sec protein translocase complex. Interacts with the SecYEG preprotein conducting channel. SecDF uses the proton motive force (PMF) to complete protein translocation after the ATP-dependent function of SecA. This Rickettsia akari (strain Hartford) protein is Protein translocase subunit SecF.